Consider the following 2631-residue polypeptide: Cyclic GMP-binding protein C (2631 aa).

6 LRR repeats span residues 170 to 194 (TAQI…IFSL), 196 to 217 (WIQK…IGKL), 218 to 240 (QQLQ…IGDL), 242 to 262 (NLKR…LERL), 263 to 285 (SKLE…IASL), and 287 to 308 (SLKT…VVSK). In terms of domain architecture, Roc spans 323 to 515 (GARPCLRSKL…QLIEDIIKTQ (193 aa)). GTP is bound by residues 336–343 (GDPGVGKT), 402–406 (DIANQ), and 458–461 (THID). A COR domain is found at 523-741 (PSSFFTLEEA…ESCQKRAVIL (219 aa)). One can recognise a Protein kinase domain in the interval 878–1172 (VKINKEVGRG…KKKFAPLPFT (295 aa)). ATP-binding positions include 884–892 (VGRGAFGIV) and Lys905. The Proton acceptor role is filled by Asp1023. Residues 1225-1250 (ISLTSSGTSPTNSPVGGLLSQSLTQP) are compositionally biased toward polar residues. Disordered regions lie at residues 1225–1263 (ISLT…ILST) and 1387–1418 (SSAT…RNSV). Over residues 1251 to 1263 (ITSGGSTSGILST) the composition is skewed to low complexity. One can recognise an N-terminal Ras-GEF domain in the interval 1366-1539 (SVSIIIAATM…QIYGTLTTHE (174 aa)). A compositionally biased stretch (basic and acidic residues) spans 1392-1404 (KSEHISTRRRSDT). The DEP domain maps to 1620 to 1706 (PLLGITVKEK…SPTSFYMFLE (87 aa)). In terms of domain architecture, Ras-GEF spans 1708-1971 (DPELIARQYT…DLKALDSLQI (264 aa)). The segment at 1989–2013 (GTTNDDKEKGDENGGGLTSSNFFGN) is disordered. 2014-2133 (GSDELTERDW…AKFYKIMANQ (120 aa)) is a binding site for a nucleoside 3',5'-cyclic phosphate. Disordered stretches follow at residues 2142-2180 (PWSK…GGGL), 2192-2239 (MSLS…TTTD), and 2263-2346 (SANL…GQQP). The span at 2144–2174 (SKPKNTTGGSSSSNQSAGPDNILGTTPTGIS) shows a compositional bias: low complexity. Over residues 2212-2221 (LPSPPAPLQS) the composition is skewed to pro residues. Positions 2222–2238 (PPTSGISSPTTTTSTTT) are enriched in low complexity. Positions 2287-2299 (TINKDPHQRDSGS) are enriched in basic and acidic residues. Positions 2321–2336 (GSISYLGRTQTSTSPL) are enriched in polar residues. The 61-residue stretch at 2354–2414 (EFCQRFALVD…KNIDKLICIN (61 aa)) folds into the GRAM domain. A nucleoside 3',5'-cyclic phosphate is bound at residue 2490–2616 (GDELTKEDWE…ASKWFKYLAT (127 aa)).

Belongs to the protein kinase superfamily. TKL Ser/Thr protein kinase family. ROCO subfamily.

The catalysed reaction is L-seryl-[protein] + ATP = O-phospho-L-seryl-[protein] + ADP + H(+). It carries out the reaction L-threonyl-[protein] + ATP = O-phospho-L-threonyl-[protein] + ADP + H(+). Its function is as follows. Promotes the exchange of Ras-bound GDP by GTP. Required for cyclic GMP-mediated chemotaxis, polarity. Plays a key role in cyclic AMP-induced myosin II translocation to the cortex. Also involved in the phosphorylation of mlkA and mlcR, either directly or via an intermediate kinase. The polypeptide is Cyclic GMP-binding protein C (gbpC) (Dictyostelium discoideum (Social amoeba)).